We begin with the raw amino-acid sequence, 757 residues long: Alcohol dehydrogenase (quinone), dehydrogenase subunit (757 aa).

A signal peptide spans 1–34 (MTSGLLTPIKVTKKRLLSCAAALAFSAAVPVAFA). Residue glutamine 35 is modified to Pyrrolidone carboxylic acid. Glutamate 95 contributes to the pyrroloquinoline quinone binding site. Cysteine 141 and cysteine 142 form a disulfide bridge. Position 147 (arginine 147) interacts with pyrroloquinoline quinone. Glutamate 215 is a Ca(2+) binding site. Threonine 277 serves as a coordination point for pyrroloquinoline quinone. Ca(2+) is bound by residues asparagine 297 and aspartate 342. Catalysis depends on aspartate 342, which acts as the Proton acceptor. Pyrroloquinoline quinone is bound by residues lysine 369 and isoleucine 588. The 80-residue stretch at 640 to 719 (ARQKDGYFMY…DIRNFIVKRA (80 aa)) folds into the Cytochrome c domain. The heme c site is built by cysteine 653, cysteine 656, histidine 657, and methionine 696. The tract at residues 726-757 (EVKARENSTGVPNDQFLNVPQSTADVPTADHP) is disordered. The segment covering 732–750 (NSTGVPNDQFLNVPQSTAD) has biased composition (polar residues).

Belongs to the bacterial PQQ dehydrogenase family. In terms of assembly, the alcohol dehydrogenase multicomponent enzyme system is composed of a dehydrogenase subunit I (AdhA), a cytochrome c subunit II (AdhB) and a subunit III (AdhS). Pyrroloquinoline quinone is required as a cofactor. It depends on Ca(2+) as a cofactor. The cofactor is heme c.

The protein resides in the cell membrane. The enzyme catalyses ethanol + a ubiquinone = a ubiquinol + acetaldehyde. 2,6-dichloro-4-dicyanovinylphenol (PC16) and antimycin A inhibit ubiquinol oxidation activity more selectively than the ubiquinone reductase activity. Dehydrogenase component of the alcohol dehydrogenase multicomponent enzyme system which is involved in the production of acetic acid and in the ethanol oxidase respiratory chain. Quinohemoprotein alcohol dehydrogenase (ADH) catalyzes the oxidation of ethanol to acetaldehyde by transferring electrons to the ubiquinone embedded in the membrane phospholipids. The electrons transfer from ethanol to membranous ubiquinone occurs from pyrroloquinoline quinone (PQQ) to one heme c in subunit I (AdhA), and finally to two heme c in subunit II (AdhB). Besides ubiquinone reduction, ADH also has a ubiquinol (QH2) oxidation reaction which mediates electron transfer from ubiquinol to the non-energy generating bypass oxidase system. The electrons transfer occurs from ubiquinol (QH2) to the additional heme c within subunit II (AdhB). Also able to use quinone analogs such as 2,3-dimethoxy-5-methyl-6-n-decyl-1,4-benzoquinone (DB) and 2,3-dimethoxy-5-methyl-6-n-pentyl-1,4-benzoquinone (PB). The protein is Alcohol dehydrogenase (quinone), dehydrogenase subunit of Gluconobacter oxydans (strain 621H) (Gluconobacter suboxydans).